Reading from the N-terminus, the 1622-residue chain is Transient receptor potential cation channel subfamily M member 1 (1622 aa).

5 disordered regions span residues 1-25 (MGSM…GSQK), 64-95 (PPLP…KHTQ), 450-490 (LAPP…EVEE), 618-641 (LGME…EEEI), and 822-856 (SKEN…HKKQ). The Cytoplasmic portion of the chain corresponds to 1 to 875 (MGSMRKMSSS…CEFYNAPIVK (875 aa)). A compositionally biased stretch (low complexity) spans 8 to 25 (SSSFKRGSIKSSTSGSQK). A compositionally biased stretch (polar residues) spans 70 to 95 (APSTTGEDTKQADTQSGKWSVSKHTQ). The segment covering 472-483 (GRGKGKGKKKGK) has biased composition (basic residues). Basic and acidic residues-rich tracts occupy residues 823-832 (KENEDGKEKE) and 843-853 (GSRKGDEENEH). Residues 876 to 896 (FWFYTISYLGYLLLFNYVILV) traverse the membrane as a helical segment. Over 897–942 (RMDGWPSPQEWIVISYIVSLALEKIREILMSEPGKLSQKIKVWLQE) the chain is Extracellular. The chain crosses the membrane as a helical span at residues 943–963 (YWNITDLVAISMFMVGAILRL). Residues 964–973 (QSQPYMGYGR) lie on the Cytoplasmic side of the membrane. Residues 974–994 (VIYCVDIILWYIRVLDIFGVN) form a helical membrane-spanning segment. Over 995–1006 (KYLGPYVMMIGK) the chain is Extracellular. The chain crosses the membrane as a helical span at residues 1007–1027 (MMIDMLYFVVIMLVVLMSFGV). The Cytoplasmic portion of the chain corresponds to 1028–1099 (ARQAILHPEE…CIPGAWLTPA (72 aa)). A helical membrane pass occupies residues 1100 to 1120 (LMACYLLVANILLVNLLIAVF). Asparagine 1121 carries an N-linked (GlcNAc...) asparagine glycan. The Extracellular portion of the chain corresponds to 1121-1150 (NNTFFEVKSISNQVWKFQRYQLIMTFHDRP). A helical transmembrane segment spans residues 1151-1171 (VLPPPMIILSHIYIIIMRLSG). Topologically, residues 1172-1622 (RCRKKREGDQ…QEKRSAETEC (451 aa)) are cytoplasmic. Residues 1224-1252 (DERIRVTSERVENMSMRLEEINERENFMK) adopt a coiled-coil conformation. Disordered stretches follow at residues 1354–1383 (EDAK…RSRL), 1389–1408 (LSTE…EFDP), and 1567–1622 (CLRS…ETEC). The span at 1613–1622 (QEKRSAETEC) shows a compositional bias: basic and acidic residues.

The protein belongs to the transient receptor (TC 1.A.4) family. LTrpC subfamily. TRPM1 sub-subfamily. As to quaternary structure, homodimer. Interacts with TRPM3; the interaction results in the formation of a heteromultimeric cation channel complex that are functionally different from the homomeric channels. Interacts with GPR179. Associates with both guanine nucleotide-binding proteins G(o) and beta-gamma G protein dimer; implicated in directly regulating TRPM1 channel open-state. In terms of tissue distribution, expressed in the retina where it localizes on dendritic tips of ON bipolar cells. Specifically, it is expressed in retinal bipolar cells (BPCs) of the ON subtype. Not detected in brain, lung, liver, heart, kidney, spleen or small intestine. Also expressed at high levels in poorly metastatic variants of B16 melanoma and at much reduced levels in highly metastatic variants of B16 melanoma.

The protein localises to the cell membrane. It localises to the endoplasmic reticulum membrane. Its subcellular location is the cell projection. The protein resides in the axon. It catalyses the reaction Ca(2+)(in) = Ca(2+)(out). The catalysed reaction is Mg(2+)(in) = Mg(2+)(out). The enzyme catalyses Mn(2+)(in) = Mn(2+)(out). It carries out the reaction Ni(2+)(in) = Ni(2+)(out). With respect to regulation, inhibited by extracellular zinc ions. Inhibited by intracellular Mg(2+). Activated by the neuroactive steroid pregnenolone sulfate. Negatively regulated by activation of GRM6 receptors in the ON-bipolar cells. Functionally, constitutively open nonselective divalent cation-conducting channels which mediate the influx of Ca(2+), Mg(2+), Mn(2+), Ba(2+), and Ni(2+) into the cytoplasm, leading to membrane depolarization. Impermeable to zinc ions. In addition, forms heteromultimeric ion channels with TRPM3 which are permeable for calcium and zinc ions. Plays an essential role for the depolarizing photoresponse of retinal ON bipolar cells. In the dark, tonic release of glutamate activates the G-protein coupled receptor for glutamate (GRM6), its activation induces the release of G(o) and the beta-gamma G protein dimer. Both subunits can interact and inactivate the TRPM1 channel. A light onset, induces decrease in glutamate release and deactivation of GRM6 leading to channel opening and membrane depolarization. May play a role in metastasis suppression. In Mus musculus (Mouse), this protein is Transient receptor potential cation channel subfamily M member 1.